The sequence spans 126 residues: Small ribosomal subunit protein uS13 (126 aa).

The interval 98–126 (VRGQSTKNNARTRKGKRKTVANKKKAAKK) is disordered. Positions 107 to 126 (ARTRKGKRKTVANKKKAAKK) are enriched in basic residues.

The protein belongs to the universal ribosomal protein uS13 family. Part of the 30S ribosomal subunit. Forms a loose heterodimer with protein S19. Forms two bridges to the 50S subunit in the 70S ribosome.

In terms of biological role, located at the top of the head of the 30S subunit, it contacts several helices of the 16S rRNA. In the 70S ribosome it contacts the 23S rRNA (bridge B1a) and protein L5 of the 50S subunit (bridge B1b), connecting the 2 subunits; these bridges are implicated in subunit movement. Contacts the tRNAs in the A and P-sites. In Amoebophilus asiaticus (strain 5a2), this protein is Small ribosomal subunit protein uS13.